Consider the following 310-residue polypeptide: Manganese ABC transporter substrate-binding lipoprotein PsaA (310 aa).

An N-terminal signal peptide occupies residues 1–20 (MKKIASVLALFVALLFGLLA). Residue C21 is the site of N-palmitoyl cysteine attachment. Residue C21 is the site of S-diacylglycerol cysteine attachment. Mn(2+) contacts are provided by H68, H140, E206, and D281.

Belongs to the bacterial solute-binding protein 9 family. Lipoprotein receptor antigen (Lrai) subfamily.

It is found in the cell membrane. Part of the ATP-binding cassette (ABC) transport system PsaABC involved in manganese import. Binds manganese with high affinity and specificity and delivers it to the membrane permease for translocation into the cytoplasm. Also acts as an adhesin which is involved on adherence to extracellular matrix. The protein is Manganese ABC transporter substrate-binding lipoprotein PsaA of Streptococcus pneumoniae.